Here is a 488-residue protein sequence, read N- to C-terminus: Probable malate:quinone oxidoreductase (488 aa).

It belongs to the MQO family. FAD serves as cofactor.

It catalyses the reaction (S)-malate + a quinone = a quinol + oxaloacetate. It functions in the pathway carbohydrate metabolism; tricarboxylic acid cycle; oxaloacetate from (S)-malate (quinone route): step 1/1. The chain is Probable malate:quinone oxidoreductase from Neisseria gonorrhoeae (strain ATCC 700825 / FA 1090).